The primary structure comprises 258 residues: UPF0246 protein Shew_1093 (258 aa).

This sequence belongs to the UPF0246 family.

The chain is UPF0246 protein Shew_1093 from Shewanella loihica (strain ATCC BAA-1088 / PV-4).